Reading from the N-terminus, the 788-residue chain is MTIHQFLLLFLFWVCLPHFCSPEIMFRRTPVPQQRILSSRVPRSDGKILHRQKRGWMWNQFFLLEEYTGSDYQYVGKLHSDQDKGDGSLKYILSGDGAGTLFIIDEKTGDIHATRRIDREEKAFYTLRAQAINRRTLRPVEPESEFVIKIHDINDNEPTFPEEIYTASVPEMSVVGTSVVQVTATDADDPSYGNSARVIYSILQGQPYFSVEPETGIIRTALPNMNRENREQYQVVIQAKDMGGQMGGLSGTTTVNITLTDVNDNPPRFPQNTIHLRVLESSPVGTAIGSVKATDADTGKNAEVEYRIIDGDGTDMFDIVTEKDTQEGIITVKKPLDYESRRLYTLKVEAENTHVDPRFYYLGPFKDTTIVKISIEDVDEPPVFSRSSYLFEVHEDIEVGTIIGTVMARDPDSISSPIRFSLDRHTDLDRIFNIHSGNGSLYTSKPLDRELSQWHNLTVIAAEINNPKETTRVAVFVRILDVNDNAPQFAVFYDTFVCENARPGQLIQTISAVDKDDPLGGQKFFFSLAAVNPNFTVQDNEDNTARILTRKNGFNRHEISTYLLPVVISDNDYPIQSSTGTLTIRVCACDSQGNMQSCSAEALLLPAGLSTGALIAILLCIIILLVIVVLFAALKRQRKKEPLILSKEDIRDNIVSYNDEGGGEEDTQAFDIGTLRNPAAIEEKKLRRDIIPETLFIPRRTPTAPDNTDVRDFINERLKEHDLDPTAPPYDSLATYAYEGNDSIAESLSSLESGTTEGDQNYDYLREWGPRFNKLAEMYGGGESDKDS.

A signal peptide spans 1–22 (MTIHQFLLLFLFWVCLPHFCSP). Positions 23-54 (EIMFRRTPVPQQRILSSRVPRSDGKILHRQKR) are excised as a propeptide. Cadherin domains are found at residues 55-160 (GWMW…EPTF), 161-269 (PEEI…PPRF), 270-384 (PQNT…PPVF), 385-487 (SRSS…DNAP), and 488-606 (QFAV…LLLP). The Extracellular portion of the chain corresponds to 55–613 (GWMWNQFFLL…LLPAGLSTGA (559 aa)). Asparagine 256 carries N-linked (GlcNAc...) asparagine glycosylation. Asparagine 438, asparagine 456, and asparagine 534 each carry an N-linked (GlcNAc...) asparagine glycan. Residues 614-634 (LIAILLCIIILLVIVVLFAAL) traverse the membrane as a helical segment. At 635-788 (KRQRKKEPLI…YGGGESDKDS (154 aa)) the chain is on the cytoplasmic side. Phosphoserine occurs at positions 784 and 788.

Predominantly expressed in brain. Also found in adult and fetal kidney. Very low levels detected in prostate and fetal lung.

The protein localises to the cell membrane. Its function is as follows. Cadherins are calcium-dependent cell adhesion proteins. They preferentially interact with themselves in a homophilic manner in connecting cells; cadherins may thus contribute to the sorting of heterogeneous cell types. This chain is Cadherin-10 (CDH10), found in Homo sapiens (Human).